A 248-amino-acid chain; its full sequence is Pathogenesis-related thaumatin-like protein 3.4 (248 aa).

Positions 1-25 (MARAILWVLLTVMAVSLLLHAGVEG) are cleaved as a signal peptide. 8 cysteine pairs are disulfide-bonded: Cys-34–Cys-227, Cys-75–Cys-85, Cys-90–Cys-96, Cys-141–Cys-216, Cys-146–Cys-199, Cys-154–Cys-164, Cys-168–Cys-177, and Cys-178–Cys-186. Asn-235 carries N-linked (GlcNAc...) asparagine glycosylation.

Belongs to the thaumatin family. As to expression, mainly expressed in male and female strobili, and, at lower levels, in roots of seedlings and saplings.

In terms of biological role, may be involved in disease resistance. The chain is Pathogenesis-related thaumatin-like protein 3.4 from Cryptomeria japonica (Japanese cedar).